Reading from the N-terminus, the 187-residue chain is Putative glutathione-dependent formaldehyde-activating enzyme (187 aa).

Residues 20–166 (FQGGVLKCKC…FESLGLESYD (147 aa)) enclose the CENP-V/GFA domain. The Zn(2+) site is built by Cys-27, Cys-29, Cys-48, Cys-50, Cys-53, Cys-95, and Cys-98.

It belongs to the Gfa family. Zn(2+) serves as cofactor.

It carries out the reaction S-(hydroxymethyl)glutathione = glutathione + formaldehyde. It participates in one-carbon metabolism; formaldehyde degradation; formate from formaldehyde (glutathione route): step 1/3. Functionally, catalyzes the condensation of formaldehyde and glutathione to S-hydroxymethylglutathione. In Verticillium alfalfae (strain VaMs.102 / ATCC MYA-4576 / FGSC 10136) (Verticillium wilt of alfalfa), this protein is Putative glutathione-dependent formaldehyde-activating enzyme.